The chain runs to 515 residues: Calcium-dependent protein kinase 2 (515 aa).

The disordered stretch occupies residues 1-51; it reads MGNCCPGSGDAEPASSDASTGNGSSSFKAGASPSSAPAQNKPPAPIGPVLG. Residue Gly-2 is the site of N-myristoyl glycine attachment. Residues 14–38 are compositionally biased toward low complexity; the sequence is ASSDASTGNGSSSFKAGASPSSAPA. The Protein kinase domain maps to 61–319; sequence YTIGKELGRG…AYEVLNHPWI (259 aa). ATP contacts are provided by residues 67 to 75 and Lys-90; that span reads LGRGQFGVT. Residue Asp-185 is the Proton acceptor of the active site. The autoinhibitory domain stretch occupies residues 325–355; the sequence is APDTPLDNAVMNRLKQFRAMNQFKKAALRVI. EF-hand domains are found at residues 362–397, 398–433, 434–469, and 473–504; these read EEIR…QGTK, LTEA…MNRM, DREE…KGLL, and DIKD…GNPE. The Ca(2+) site is built by Asp-375, Asp-377, Ser-379, Thr-381, Glu-386, Asp-411, Asp-413, Asn-415, Thr-417, Glu-422, Asp-447, Asp-449, Ser-451, Cys-453, Glu-458, Asp-482, Asp-484, Asp-486, Arg-488, and Glu-493.

Belongs to the protein kinase superfamily. Ser/Thr protein kinase family. CDPK subfamily. As to expression, expressed in heading panicles, spikelets and mature pollen grains.

It is found in the membrane. The catalysed reaction is L-seryl-[protein] + ATP = O-phospho-L-seryl-[protein] + ADP + H(+). It carries out the reaction L-threonyl-[protein] + ATP = O-phospho-L-threonyl-[protein] + ADP + H(+). Its activity is regulated as follows. Activated by calcium. Autophosphorylation may play an important role in the regulation of the kinase activity. In terms of biological role, may play a role in signal transduction pathways that involve calcium as a second messenger. The protein is Calcium-dependent protein kinase 2 of Oryza sativa subsp. japonica (Rice).